The sequence spans 622 residues: Cilia- and flagella-associated protein 206 (622 aa).

It belongs to the CFAP206 family.

The protein resides in the cytoplasm. It is found in the cytoskeleton. The protein localises to the cilium axoneme. It localises to the cilium basal body. In terms of biological role, essential for sperm motility and is involved in the regulation of the beating frequency of motile cilia on the epithelial cells of the respiratory tract. Required for the establishment of radial spokes in sperm flagella. The chain is Cilia- and flagella-associated protein 206 from Bos taurus (Bovine).